A 68-amino-acid chain; its full sequence is Tabimmunregulin 12 (68 aa).

The signal sequence occupies residues 1-24 (MLFKSYVYFLAGLLLVGLFTSCDA). A propeptide spanning residues 25-38 (DAQYEELVPGFFRK) is cleaved from the precursor.

As to expression, expressed in salivary glands.

It is found in the secreted. Its function is as follows. Horsefly salivary gland immunosuppressant protein that likely inhibits the host inflammatory response by regulation of anti- and pro-inflammatory cytokines. When tested on mouse splenocytes in the presence of LPS, it increases the secretion of the proinflammatory cytokine interleukin-10 (IL10) and decreases the secretion of the proinflammatory cytokine interferon-gamma (IFNG) in a dose-dependent manner. This is Tabimmunregulin 12 from Tabanus yao (Horsefly).